The chain runs to 602 residues: Threonine--tRNA ligase (602 aa).

Positions D208 to P499 are catalytic. Residues C300, H351, and H476 each contribute to the Zn(2+) site.

Belongs to the class-II aminoacyl-tRNA synthetase family. In terms of assembly, homodimer. The cofactor is Zn(2+).

The protein resides in the cytoplasm. It catalyses the reaction tRNA(Thr) + L-threonine + ATP = L-threonyl-tRNA(Thr) + AMP + diphosphate + H(+). Its function is as follows. Catalyzes the attachment of threonine to tRNA(Thr) in a two-step reaction: L-threonine is first activated by ATP to form Thr-AMP and then transferred to the acceptor end of tRNA(Thr). Also edits incorrectly charged L-seryl-tRNA(Thr). The chain is Threonine--tRNA ligase from Campylobacter jejuni (strain RM1221).